A 512-amino-acid chain; its full sequence is Serine--tRNA ligase, cytoplasmic (512 aa).

Met1 is subject to N-acetylmethionine. The tract at residues 9-61 (RVDKGGDPALIRETQEKRFKDPGLVDQLVKADSEWRRCRFRADNLNKLKNLCS) is interaction with tRNA. Position 241 is a phosphoserine (Ser241). 2 residues coordinate L-serine: Thr271 and Arg302. ATP is bound by residues 302–304 (RQE) and 318–321 (VHQF). The residue at position 323 (Lys323) is an N6-acetyllysine. Position 325 (Glu325) interacts with L-serine. 391–394 (ELVS) contacts ATP. Position 427 (Asn427) interacts with L-serine. The segment at 472–512 (KPAPIDQEPSKKQKKQHEGSKKKAKEVTLENQLQNMEVTEA) is disordered. Residues 479–499 (EPSKKQKKQHEGSKKKAKEVT) show a composition bias toward basic and acidic residues. Positions 482 to 494 (KKQKKQHEGSKKK) match the Nuclear localization signal motif. Positions 500-512 (LENQLQNMEVTEA) are enriched in polar residues.

Belongs to the class-II aminoacyl-tRNA synthetase family. Type-1 seryl-tRNA synthetase subfamily. Homodimer. The tRNA molecule may bind across the dimer. Interacts with SIRT2. Interacts with METTL6; interaction is required for the tRNA N(3)-methylcytidine methyltransferase activity of METTL6.

Its subcellular location is the cytoplasm. The protein resides in the nucleus. The catalysed reaction is tRNA(Ser) + L-serine + ATP = L-seryl-tRNA(Ser) + AMP + diphosphate + H(+). It carries out the reaction tRNA(Sec) + L-serine + ATP = L-seryl-tRNA(Sec) + AMP + diphosphate + H(+). It functions in the pathway aminoacyl-tRNA biosynthesis; selenocysteinyl-tRNA(Sec) biosynthesis; L-seryl-tRNA(Sec) from L-serine and tRNA(Sec): step 1/1. Functionally, catalyzes the attachment of serine to tRNA(Ser) in a two-step reaction: serine is first activated by ATP to form Ser-AMP and then transferred to the acceptor end of tRNA(Ser). Is probably also able to aminoacylate tRNA(Sec) with serine, to form the misacylated tRNA L-seryl-tRNA(Sec), which will be further converted into selenocysteinyl-tRNA(Sec). In the nucleus, binds to the VEGFA core promoter and prevents MYC binding and transcriptional activation by MYC. Recruits SIRT2 to the VEGFA promoter, promoting deacetylation of histone H4 at 'Lys-16' (H4K16). Thereby, inhibits the production of VEGFA and sprouting angiogenesis mediated by VEGFA. The protein is Serine--tRNA ligase, cytoplasmic (Sars1) of Rattus norvegicus (Rat).